The sequence spans 105 residues: Oxytocin-neurophysin 1 (105 aa).

A disulfide bridge links Cys1 with Cys6. The residue at position 9 (Gly9) is a Glycine amide. 7 disulfides stabilise this stretch: Cys22/Cys66, Cys25/Cys39, Cys33/Cys56, Cys40/Cys46, Cys73/Cys85, Cys79/Cys97, and Cys86/Cys91.

Belongs to the vasopressin/oxytocin family. As to quaternary structure, interacts with oxytocin receptor (Ki=1.5 nM). Interacts with vasopressin V1aR/AVPR1A (Ki=37 nM), V1bR/AVPR1B (Ki=222 nM), and V2R/AVPR2 receptors (Ki=823 nM).

It localises to the secreted. Functionally, neurophysin 1 specifically binds oxytocin. Oxytocin causes contraction of the smooth muscle of the uterus and of the mammary gland. Acts by binding to oxytocin receptor (OXTR). The chain is Oxytocin-neurophysin 1 (OXT) from Equus caballus (Horse).